The primary structure comprises 210 residues: Regulator of G-protein signaling 17 (210 aa).

A disordered region spans residues 1 to 21 (MRKRQQSQNEGTPAVSQAPGN). In terms of domain architecture, RGS spans 84–200 (NFDKMMKAPA…LNSQIYKSFV (117 aa)). Tyr137 carries the post-translational modification Phosphotyrosine.

As to quaternary structure, interacts with GNAI1 and GNAQ. Interacts with GNAZ and GNAI2. Interacts with OPRM1. Forms a complex with mu-opioid receptors and G(alpha)z/i2 subunits, including GNAZ and GNAI2; the formation of this complex results in mu-opioid receptor desensitization. Interacts with HINT1. Post-translationally, N- and O-glycosylated in synapsomal membranes. Serine phosphorylated in synapsomal membranes. In terms of processing, sumoylated with SUMO1 and SUM02 in synaptosomes. The sumoylated forms act as a scaffold for sequestering mu-opioid receptor-activated G(alpha) subunits. Desumoylated by HINT1. Predominantly expressed in the cerebellum. Also expressed in the cortex and medulla. Weakly expressed in a number of peripheral tissues notably spleen, lung and leukocytes.

It is found in the membrane. Its subcellular location is the synapse. It localises to the synaptosome. The protein resides in the nucleus. The protein localises to the cytoplasm. Functionally, regulates G protein-coupled receptor signaling cascades, including signaling via muscarinic acetylcholine receptor CHRM2 and dopamine receptor DRD2. Inhibits signal transduction by increasing the GTPase activity of G protein alpha subunits, thereby driving them into their inactive GDP-bound form. Binds selectively to GNAZ and GNAI2 subunits, accelerates their GTPase activity and regulates their signaling activities. Negatively regulates mu-opioid receptor-mediated activation of the G-proteins. The chain is Regulator of G-protein signaling 17 (RGS17) from Homo sapiens (Human).